Here is a 405-residue protein sequence, read N- to C-terminus: Arginine deiminase (405 aa).

Catalysis depends on Cys-395, which acts as the Amidino-cysteine intermediate.

This sequence belongs to the arginine deiminase family.

The protein resides in the cytoplasm. The catalysed reaction is L-arginine + H2O = L-citrulline + NH4(+). It functions in the pathway amino-acid degradation; L-arginine degradation via ADI pathway; carbamoyl phosphate from L-arginine: step 1/2. This Rhodococcus jostii (strain RHA1) protein is Arginine deiminase.